The chain runs to 238 residues: DNA repair protein RecO (238 aa).

It belongs to the RecO family.

Its function is as follows. Involved in DNA repair and RecF pathway recombination. The polypeptide is DNA repair protein RecO (Anaplasma marginale (strain St. Maries)).